The chain runs to 458 residues: Ribulose bisphosphate carboxylase (458 aa).

A substrate-binding site is contributed by Asn-111. The active-site Proton acceptor is the Lys-166. Substrate is bound at residue Lys-168. The Mg(2+) site is built by Lys-191, Asp-193, and Glu-194. Lys-191 bears the N6-carboxylysine mark. Residue His-287 is the Proton acceptor of the active site. Residues Arg-288, His-321, and Ser-368 each coordinate substrate.

This sequence belongs to the RuBisCO large chain family. Type II subfamily. Homodimer. It depends on Mg(2+) as a cofactor.

The catalysed reaction is 2 (2R)-3-phosphoglycerate + 2 H(+) = D-ribulose 1,5-bisphosphate + CO2 + H2O. It catalyses the reaction D-ribulose 1,5-bisphosphate + O2 = 2-phosphoglycolate + (2R)-3-phosphoglycerate + 2 H(+). Functionally, ruBisCO catalyzes two reactions: the carboxylation of D-ribulose 1,5-bisphosphate, the primary event in carbon dioxide fixation, as well as the oxidative fragmentation of the pentose substrate. Both reactions occur simultaneously and in competition at the same active site. The protein is Ribulose bisphosphate carboxylase (cbbM) of Rhodobacter capsulatus (strain ATCC BAA-309 / NBRC 16581 / SB1003).